We begin with the raw amino-acid sequence, 93 residues long: Small ribosomal subunit protein uS19 (93 aa).

Belongs to the universal ribosomal protein uS19 family.

In terms of biological role, protein S19 forms a complex with S13 that binds strongly to the 16S ribosomal RNA. The protein is Small ribosomal subunit protein uS19 of Tropheryma whipplei (strain TW08/27) (Whipple's bacillus).